A 267-amino-acid chain; its full sequence is Trehalose 2-sulfotransferase (267 aa).

Alpha,alpha-trehalose is bound by residues Gln-14, 33-39 (EPQEFFQ), Pro-48, and Trp-53. Glu-36 acts as the Proton acceptor in catalysis.

It belongs to the Stf0 sulfotransferase family. As to quaternary structure, homodimer.

The enzyme catalyses alpha,alpha-trehalose + 3'-phosphoadenylyl sulfate = 2-O-sulfo-alpha,alpha-trehalose + adenosine 3',5'-bisphosphate + H(+). The protein operates within glycolipid metabolism. Functionally, catalyzes the sulfuryl group transfer from 3'-phosphoadenosine-5'-phosphosulfate (PAPS) to trehalose, leading to trehalose-2-sulfate (T2S). The sulfation of trehalose is the first step in the biosynthesis of sulfolipid-1 (SL-1), a major cell wall glycolipid and the most abundant sulfated metabolite found in Mycobacterium tuberculosis, that is a potential virulence factor thought to mediate host-pathogen interactions. The protein is Trehalose 2-sulfotransferase of Mycobacterium tuberculosis (strain ATCC 35801 / TMC 107 / Erdman).